Here is a 729-residue protein sequence, read N- to C-terminus: Denticleless protein homolog (729 aa).

Methionine 1 is modified (N-acetylmethionine). 3 WD repeats span residues 47–89, 96–135, and 138–178; these read GVPV…SKKT, AHWN…LMGT, and GHQC…KDGF. The DDB1-binding motif motif lies at 168-171; the sequence is WDTR. Polar residues predominate over residues 189–198; sequence HNTADKQTPS. The disordered stretch occupies residues 189-212; that stretch reads HNTADKQTPSKPKKKQNSKGLAPA. Phosphothreonine is present on threonine 196. A Nuclear localization signal motif is present at residues 197 to 203; sequence PSKPKKK. WD repeat units follow at residues 214–253, 269–308, 313–354, and 358–398; these read DSQQ…TAYR, TRKL…TSPV, GHQN…HPPT, and GHSQ…EEKP. A DDB1-binding motif motif is present at residues 243-246; the sequence is WDLR. Residues serine 409 and serine 425 each carry the phosphoserine modification. 2 disordered regions span residues 416-445 and 460-491; these read KACP…SSPS and PSST…VSPK. A compositionally biased stretch (low complexity) spans 427–445; sequence STPAKAPRAKSSPSISSPS. A compositionally biased stretch (polar residues) spans 460–475; that stretch reads PSSTPTFSVKTTPATT. Threonine 463 is modified (phosphothreonine; by CDK1 and CDK2). Over residues 476 to 491 the composition is skewed to low complexity; that stretch reads RSSVSRRGSISSVSPK. 4 positions are modified to phosphoserine: serine 484, serine 489, serine 494, and serine 511. Positions 504 to 546 are disordered; sequence VTRTPSSSPPVTPPASETKISSPRKALIPVSQKSSQADACSES. The residue at position 515 (threonine 515) is a Phosphothreonine. Residue serine 556 is modified to Phosphoserine. A compositionally biased stretch (polar residues) spans 596 to 607; that stretch reads VLSQDSEGPTKS. Residues 596–705 are disordered; sequence VLSQDSEGPT…GPVTITPSSM (110 aa). Composition is skewed to low complexity over residues 630-645 and 674-688; these read EGCG…CGEG and SSPR…SSRR. Serine 675 and serine 678 each carry phosphoserine. Residues threonine 683 and threonine 701 each carry the phosphothreonine modification.

It belongs to the WD repeat cdt2 family. In terms of assembly, component of the DCX(DTL) E3 ubiquitin ligase complex (also called CRL4(CDT2)), at least composed of CUL4 (CUL4A or CUL4B), DDB1, DTL/CDT2 and RBX1. Interacts with CDKN1A and DDB1. Interacts with FBXO11; SCF(FBXWO11) controls DTL stability but DCX(DTL) does not control FBXO11 stability. Interacts with CRY1. Post-translationally, ubiquitinated by the anaphase promoting complex/cyclosome (APC/C). Autoubiquitinated through 'Lys-48'-polyubiquitin chains in a PCNA-independent reaction, allowing proteasomal turnover. Polyubiquitinated by SCF(FBXO11) when not phosphorylated, leading to its degradation. A tight regulation of the polyubiquitination by SCF(FBXO11) is involved in the control of different processes such as TGF-beta signaling, cell cycle progression and exit. Phosphorylated at Thr-463 by CDK1/Cyclin B and CDK2/Cycnlin A but not by CDK2/Cyclin E, MAPK1 or PLK1. Phosphorylation at Thr-463 inhibits the interaction with FBXO11 and decreases upon cell cycle exit induced by TGF-beta or serum starvation.

The protein resides in the nucleus. It localises to the nucleus membrane. It is found in the cytoplasm. Its subcellular location is the cytoskeleton. The protein localises to the microtubule organizing center. The protein resides in the centrosome. It localises to the chromosome. Its pathway is protein modification; protein ubiquitination. Its function is as follows. Substrate-specific adapter of a DCX (DDB1-CUL4-X-box) E3 ubiquitin-protein ligase complex required for cell cycle control, DNA damage response and translesion DNA synthesis. The DCX(DTL) complex, also named CRL4(CDT2) complex, mediates the polyubiquitination and subsequent degradation of CDT1, CDKN1A/p21(CIP1), FBH1, KMT5A and SDE2. CDT1 degradation in response to DNA damage is necessary to ensure proper cell cycle regulation of DNA replication. CDKN1A/p21(CIP1) degradation during S phase or following UV irradiation is essential to control replication licensing. KMT5A degradation is also important for a proper regulation of mechanisms such as TGF-beta signaling, cell cycle progression, DNA repair and cell migration. Most substrates require their interaction with PCNA for their polyubiquitination: substrates interact with PCNA via their PIP-box, and those containing the 'K+4' motif in the PIP box, recruit the DCX(DTL) complex, leading to their degradation. In undamaged proliferating cells, the DCX(DTL) complex also promotes the 'Lys-164' monoubiquitination of PCNA, thereby being involved in PCNA-dependent translesion DNA synthesis. The DDB1-CUL4A-DTL E3 ligase complex regulates the circadian clock function by mediating the ubiquitination and degradation of CRY1. The sequence is that of Denticleless protein homolog (Dtl) from Mus musculus (Mouse).